A 333-amino-acid chain; its full sequence is Phosphoribosylformylglycinamidine cyclo-ligase (333 aa).

The protein belongs to the AIR synthase family.

It localises to the cytoplasm. It carries out the reaction 2-formamido-N(1)-(5-O-phospho-beta-D-ribosyl)acetamidine + ATP = 5-amino-1-(5-phospho-beta-D-ribosyl)imidazole + ADP + phosphate + H(+). Its pathway is purine metabolism; IMP biosynthesis via de novo pathway; 5-amino-1-(5-phospho-D-ribosyl)imidazole from N(2)-formyl-N(1)-(5-phospho-D-ribosyl)glycinamide: step 2/2. This Methanosarcina acetivorans (strain ATCC 35395 / DSM 2834 / JCM 12185 / C2A) protein is Phosphoribosylformylglycinamidine cyclo-ligase.